We begin with the raw amino-acid sequence, 511 residues long: 2,3-bisphosphoglycerate-independent phosphoglycerate mutase (511 aa).

Residues aspartate 12 and serine 62 each coordinate Mn(2+). Serine 62 (phosphoserine intermediate) is an active-site residue. Substrate contacts are provided by residues histidine 123, 152 to 153, arginine 184, arginine 190, 259 to 262, and lysine 333; these read RD and RADR. The Mn(2+) site is built by aspartate 401, histidine 405, aspartate 442, histidine 443, and histidine 460.

It belongs to the BPG-independent phosphoglycerate mutase family. As to quaternary structure, monomer. The cofactor is Mn(2+).

It carries out the reaction (2R)-2-phosphoglycerate = (2R)-3-phosphoglycerate. It functions in the pathway carbohydrate degradation; glycolysis; pyruvate from D-glyceraldehyde 3-phosphate: step 3/5. Catalyzes the interconversion of 2-phosphoglycerate and 3-phosphoglycerate. This Nitratidesulfovibrio vulgaris (strain ATCC 29579 / DSM 644 / CCUG 34227 / NCIMB 8303 / VKM B-1760 / Hildenborough) (Desulfovibrio vulgaris) protein is 2,3-bisphosphoglycerate-independent phosphoglycerate mutase.